Consider the following 191-residue polypeptide: Pyridoxal 5'-phosphate synthase subunit PdxT (191 aa).

48–50 (GES) lines the L-glutamine pocket. Cys-81 serves as the catalytic Nucleophile. L-glutamine is bound by residues Arg-109 and 136 to 137 (IR). Residues His-172 and Glu-174 each act as charge relay system in the active site.

It belongs to the glutaminase PdxT/SNO family. As to quaternary structure, in the presence of PdxS, forms a dodecamer of heterodimers. Only shows activity in the heterodimer.

It carries out the reaction aldehydo-D-ribose 5-phosphate + D-glyceraldehyde 3-phosphate + L-glutamine = pyridoxal 5'-phosphate + L-glutamate + phosphate + 3 H2O + H(+). It catalyses the reaction L-glutamine + H2O = L-glutamate + NH4(+). It participates in cofactor biosynthesis; pyridoxal 5'-phosphate biosynthesis. Its function is as follows. Catalyzes the hydrolysis of glutamine to glutamate and ammonia as part of the biosynthesis of pyridoxal 5'-phosphate. The resulting ammonia molecule is channeled to the active site of PdxS. The chain is Pyridoxal 5'-phosphate synthase subunit PdxT from Thermus thermophilus (strain ATCC BAA-163 / DSM 7039 / HB27).